The sequence spans 114 residues: Large ribosomal subunit protein uL22 (114 aa).

It belongs to the universal ribosomal protein uL22 family. As to quaternary structure, part of the 50S ribosomal subunit.

In terms of biological role, this protein binds specifically to 23S rRNA; its binding is stimulated by other ribosomal proteins, e.g. L4, L17, and L20. It is important during the early stages of 50S assembly. It makes multiple contacts with different domains of the 23S rRNA in the assembled 50S subunit and ribosome. Its function is as follows. The globular domain of the protein is located near the polypeptide exit tunnel on the outside of the subunit, while an extended beta-hairpin is found that lines the wall of the exit tunnel in the center of the 70S ribosome. The sequence is that of Large ribosomal subunit protein uL22 from Myxococcus xanthus (strain DK1622).